We begin with the raw amino-acid sequence, 239 residues long: Ribonuclease PH (239 aa).

Phosphate is bound by residues Arg87 and 125 to 127 (GTR).

It belongs to the RNase PH family. In terms of assembly, homohexameric ring arranged as a trimer of dimers.

The catalysed reaction is tRNA(n+1) + phosphate = tRNA(n) + a ribonucleoside 5'-diphosphate. Functionally, phosphorolytic 3'-5' exoribonuclease that plays an important role in tRNA 3'-end maturation. Removes nucleotide residues following the 3'-CCA terminus of tRNAs; can also add nucleotides to the ends of RNA molecules by using nucleoside diphosphates as substrates, but this may not be physiologically important. Probably plays a role in initiation of 16S rRNA degradation (leading to ribosome degradation) during starvation. This chain is Ribonuclease PH, found in Azotobacter vinelandii (strain DJ / ATCC BAA-1303).